We begin with the raw amino-acid sequence, 217 residues long: 3-isopropylmalate dehydratase small subunit (217 aa).

Belongs to the LeuD family. LeuD type 1 subfamily. As to quaternary structure, heterodimer of LeuC and LeuD.

The catalysed reaction is (2R,3S)-3-isopropylmalate = (2S)-2-isopropylmalate. It functions in the pathway amino-acid biosynthesis; L-leucine biosynthesis; L-leucine from 3-methyl-2-oxobutanoate: step 2/4. In terms of biological role, catalyzes the isomerization between 2-isopropylmalate and 3-isopropylmalate, via the formation of 2-isopropylmaleate. The sequence is that of 3-isopropylmalate dehydratase small subunit from Paracidovorax citrulli (strain AAC00-1) (Acidovorax citrulli).